Reading from the N-terminus, the 91-residue chain is Acylphosphatase (91 aa).

An Acylphosphatase-like domain is found at 4-91 (RYLIKVLGRV…DNEKSFKIVY (88 aa)). Active-site residues include Arg19 and Asn37.

This sequence belongs to the acylphosphatase family.

It catalyses the reaction an acyl phosphate + H2O = a carboxylate + phosphate + H(+). In Clostridium acetobutylicum (strain ATCC 824 / DSM 792 / JCM 1419 / IAM 19013 / LMG 5710 / NBRC 13948 / NRRL B-527 / VKM B-1787 / 2291 / W), this protein is Acylphosphatase (acyP).